The primary structure comprises 500 residues: Aspartyl/glutamyl-tRNA(Asn/Gln) amidotransferase subunit B (500 aa).

This sequence belongs to the GatB/GatE family. GatB subfamily. As to quaternary structure, heterotrimer of A, B and C subunits.

The enzyme catalyses L-glutamyl-tRNA(Gln) + L-glutamine + ATP + H2O = L-glutaminyl-tRNA(Gln) + L-glutamate + ADP + phosphate + H(+). The catalysed reaction is L-aspartyl-tRNA(Asn) + L-glutamine + ATP + H2O = L-asparaginyl-tRNA(Asn) + L-glutamate + ADP + phosphate + 2 H(+). Its function is as follows. Allows the formation of correctly charged Asn-tRNA(Asn) or Gln-tRNA(Gln) through the transamidation of misacylated Asp-tRNA(Asn) or Glu-tRNA(Gln) in organisms which lack either or both of asparaginyl-tRNA or glutaminyl-tRNA synthetases. The reaction takes place in the presence of glutamine and ATP through an activated phospho-Asp-tRNA(Asn) or phospho-Glu-tRNA(Gln). This chain is Aspartyl/glutamyl-tRNA(Asn/Gln) amidotransferase subunit B, found in Rhizobium etli (strain CIAT 652).